The primary structure comprises 417 residues: UPF0597 protein Cphy_1256 (417 aa).

This sequence belongs to the UPF0597 family.

This is UPF0597 protein Cphy_1256 from Lachnoclostridium phytofermentans (strain ATCC 700394 / DSM 18823 / ISDg) (Clostridium phytofermentans).